We begin with the raw amino-acid sequence, 367 residues long: 2-aminoethylphosphonate--pyruvate transaminase (367 aa).

Residue Lys-194 is modified to N6-(pyridoxal phosphate)lysine.

It belongs to the class-V pyridoxal-phosphate-dependent aminotransferase family. PhnW subfamily. In terms of assembly, homodimer. Pyridoxal 5'-phosphate serves as cofactor.

The catalysed reaction is (2-aminoethyl)phosphonate + pyruvate = phosphonoacetaldehyde + L-alanine. Functionally, involved in phosphonate degradation. The sequence is that of 2-aminoethylphosphonate--pyruvate transaminase from Salmonella schwarzengrund (strain CVM19633).